The following is a 229-amino-acid chain: Ribonuclease HII (229 aa).

Positions 34–223 constitute an RNase H type-2 domain; it reads WPVAGADEAG…LRKTENGPET (190 aa). Residues aspartate 40, glutamate 41, and aspartate 131 each contribute to the a divalent metal cation site. Residues 209–229 form a disordered region; it reads MSFRPLRKTENGPETDELLSE.

This sequence belongs to the RNase HII family. Mn(2+) serves as cofactor. The cofactor is Mg(2+).

The protein localises to the cytoplasm. The catalysed reaction is Endonucleolytic cleavage to 5'-phosphomonoester.. Functionally, endonuclease that specifically degrades the RNA of RNA-DNA hybrids. This Rhizobium johnstonii (strain DSM 114642 / LMG 32736 / 3841) (Rhizobium leguminosarum bv. viciae) protein is Ribonuclease HII.